Consider the following 108-residue polypeptide: Small ribosomal subunit protein uS17 (108 aa).

It belongs to the universal ribosomal protein uS17 family. As to quaternary structure, part of the 30S ribosomal subunit.

Its function is as follows. One of the primary rRNA binding proteins, it binds specifically to the 5'-end of 16S ribosomal RNA. This chain is Small ribosomal subunit protein uS17, found in Methanoregula boonei (strain DSM 21154 / JCM 14090 / 6A8).